We begin with the raw amino-acid sequence, 462 residues long: Na(+)/H(+) antiporter NhaA (462 aa).

11 consecutive transmembrane segments (helical) span residues 24–44, 66–86, 102–122, 156–176, 196–216, 235–255, 256–275, 290–310, 312–332, 361–381, and 392–412; these read ISGL…NLPL, LPIG…TVGL, AAAV…ILFL, GWAV…ALFA, LLAI…YWFI, PWIA…EAGI, HPTL…VMHG, PFSA…VHFE, MSPL…LVVG, MIPA…IASL, and ARFG…VLLS.

The protein belongs to the NhaA Na(+)/H(+) (TC 2.A.33) antiporter family.

The protein localises to the cell membrane. It catalyses the reaction Na(+)(in) + 2 H(+)(out) = Na(+)(out) + 2 H(+)(in). Functionally, na(+)/H(+) antiporter that extrudes sodium in exchange for external protons. This is Na(+)/H(+) antiporter NhaA from Bifidobacterium breve (strain NCIMB 8807 / UCC2003).